A 194-amino-acid chain; its full sequence is Inosine triphosphate pyrophosphatase (194 aa).

ITP is bound at residue 11–16 (TGNAKK). E39 lines the Mg(2+) pocket. ITP-binding positions include K51, 67 to 68 (DT), K84, 143 to 146 (FGWD), K166, and 171 to 172 (HR).

It belongs to the HAM1 NTPase family. In terms of assembly, homodimer. Requires Mg(2+) as cofactor. The cofactor is Mn(2+).

It is found in the cytoplasm. The catalysed reaction is ITP + H2O = IMP + diphosphate + H(+). It catalyses the reaction dITP + H2O = dIMP + diphosphate + H(+). It carries out the reaction XTP + H2O = XMP + diphosphate + H(+). In terms of biological role, pyrophosphatase that hydrolyzes non-canonical purine nucleotides such as inosine triphosphate (ITP), deoxyinosine triphosphate (dITP) or xanthosine 5'-triphosphate (XTP) to their respective monophosphate derivatives. The enzyme does not distinguish between the deoxy- and ribose forms. Probably excludes non-canonical purines from RNA and DNA precursor pools, thus preventing their incorporation into RNA and DNA and avoiding chromosomal lesions. The chain is Inosine triphosphate pyrophosphatase (itpa) from Dictyostelium discoideum (Social amoeba).